The sequence spans 429 residues: Adenylosuccinate synthetase (429 aa).

GTP contacts are provided by residues 12–18 and 40–42; these read GDEGKGK and GHT. Catalysis depends on Asp-13, which acts as the Proton acceptor. Asp-13 and Gly-40 together coordinate Mg(2+). IMP contacts are provided by residues 13-16, 38-41, Thr-129, Arg-143, Gln-224, Thr-239, and Arg-303; these read DEGK and NAGH. Residue His-41 is the Proton donor of the active site. 299-305 is a substrate binding site; sequence VTTGRAR. Residues Arg-305, 331–333, and 413–415 contribute to the GTP site; these read KLD and GVG.

Belongs to the adenylosuccinate synthetase family. As to quaternary structure, homodimer. Mg(2+) serves as cofactor.

It is found in the cytoplasm. It carries out the reaction IMP + L-aspartate + GTP = N(6)-(1,2-dicarboxyethyl)-AMP + GDP + phosphate + 2 H(+). It participates in purine metabolism; AMP biosynthesis via de novo pathway; AMP from IMP: step 1/2. Plays an important role in the de novo pathway of purine nucleotide biosynthesis. Catalyzes the first committed step in the biosynthesis of AMP from IMP. In Rhodococcus jostii (strain RHA1), this protein is Adenylosuccinate synthetase.